Here is a 75-residue protein sequence, read N- to C-terminus: CLAVATA3/ESR (CLE)-related protein 33 (75 aa).

Residues methionine 1 to alanine 22 form the signal peptide. Residues proline 67 and proline 70 each carry the hydroxyproline modification. An O-linked (Ara...) hydroxyproline glycan is attached at proline 70.

It belongs to the CLV3/ESR signal peptide family. In terms of processing, the O-glycosylation (arabinosylation) of the hydroxyproline Pro-70 enhances binding affinity of the CLE33p peptide for its receptor. In terms of tissue distribution, expressed in root vasculature.

It localises to the secreted. Its subcellular location is the extracellular space. Functionally, signaling peptide involved in the regulation of root colonization by arbuscular mycorrhizal (AM) fungi. Moves from root to shoot to function with the receptor kinase SUNN, in a signaling pathway that repress strigolactone biosynthetic genes and strigolactone content in the roots, and consequently reduces the promotion of further colonization by AM fungi. This is CLAVATA3/ESR (CLE)-related protein 33 from Medicago truncatula (Barrel medic).